The primary structure comprises 151 residues: Nucleoside diphosphate kinase (151 aa).

Residues Lys9, Phe57, Arg85, Thr91, Arg102, and Asn112 each contribute to the ATP site. The active-site Pros-phosphohistidine intermediate is His115.

It belongs to the NDK family. Mg(2+) is required as a cofactor.

The protein resides in the cytoplasm. It carries out the reaction a 2'-deoxyribonucleoside 5'-diphosphate + ATP = a 2'-deoxyribonucleoside 5'-triphosphate + ADP. The catalysed reaction is a ribonucleoside 5'-diphosphate + ATP = a ribonucleoside 5'-triphosphate + ADP. In terms of biological role, major role in the synthesis of nucleoside triphosphates other than ATP. The ATP gamma phosphate is transferred to the NDP beta phosphate via a ping-pong mechanism, using a phosphorylated active-site intermediate. The protein is Nucleoside diphosphate kinase of Archaeoglobus fulgidus (strain ATCC 49558 / DSM 4304 / JCM 9628 / NBRC 100126 / VC-16).